A 550-amino-acid polypeptide reads, in one-letter code: Arginine--tRNA ligase (550 aa).

Positions 130–140 (ANPTGPIHIGG) match the 'HIGH' region motif.

It belongs to the class-I aminoacyl-tRNA synthetase family. As to quaternary structure, monomer.

The protein localises to the cytoplasm. The enzyme catalyses tRNA(Arg) + L-arginine + ATP = L-arginyl-tRNA(Arg) + AMP + diphosphate. This chain is Arginine--tRNA ligase, found in Mycobacterium sp. (strain KMS).